Here is a 219-residue protein sequence, read N- to C-terminus: Proteasome subunit beta (219 aa).

A propeptide spans 1–14 (removed in mature form; by autocatalysis); sequence MISNSEYHKEYMKG. Residue Thr15 is the Nucleophile of the active site.

It belongs to the peptidase T1B family. The 20S proteasome core is composed of 14 alpha and 14 beta subunits that assemble into four stacked heptameric rings, resulting in a barrel-shaped structure. The two inner rings, each composed of seven catalytic beta subunits, are sandwiched by two outer rings, each composed of seven alpha subunits. The catalytic chamber with the active sites is on the inside of the barrel. Has a gated structure, the ends of the cylinder being occluded by the N-termini of the alpha-subunits. Is capped at one or both ends by the proteasome regulatory ATPase, PAN.

It is found in the cytoplasm. It carries out the reaction Cleavage of peptide bonds with very broad specificity.. Its activity is regulated as follows. The formation of the proteasomal ATPase PAN-20S proteasome complex, via the docking of the C-termini of PAN into the intersubunit pockets in the alpha-rings, triggers opening of the gate for substrate entry. Interconversion between the open-gate and close-gate conformations leads to a dynamic regulation of the 20S proteasome proteolysis activity. Its function is as follows. Component of the proteasome core, a large protease complex with broad specificity involved in protein degradation. In Methanococcus maripaludis (strain C6 / ATCC BAA-1332), this protein is Proteasome subunit beta.